Consider the following 173-residue polypeptide: Putative metal-dependent hydrolase BA_2700/GBAA_2700/BAS2515 (173 aa).

Zn(2+) is bound by residues H65, H156, and H160.

The protein belongs to the metal hydrolase YfiT family. In terms of assembly, homodimer. Zn(2+) serves as cofactor.

Its subcellular location is the cytoplasm. Possible metal-dependent hydrolase. The protein is Putative metal-dependent hydrolase BA_2700/GBAA_2700/BAS2515 of Bacillus anthracis.